Here is a 165-residue protein sequence, read N- to C-terminus: Nucleotide-binding protein PMT9312_0481 (165 aa).

The protein belongs to the YajQ family.

In terms of biological role, nucleotide-binding protein. The polypeptide is Nucleotide-binding protein PMT9312_0481 (Prochlorococcus marinus (strain MIT 9312)).